A 281-amino-acid chain; its full sequence is AT-hook motif nuclear-localized protein 20 (281 aa).

2 disordered regions span residues 43–85 (MNQS…APIF) and 216–247 (MEEE…DLSG). The a.T hook DNA-binding region spans 67–79 (RRPRGRPPGSKNK). The PPC domain maps to 91-229 (PNALRSHVLE…EDGGGSRQIH (139 aa)).

It localises to the nucleus. In terms of biological role, transcription factor that specifically binds AT-rich DNA sequences related to the nuclear matrix attachment regions (MARs). Negatively regulates plant innate immunity (PTI) to pathogens through the down-regulation of the PAMP-triggered NHO1 and FRK1 expression. The sequence is that of AT-hook motif nuclear-localized protein 20 from Arabidopsis thaliana (Mouse-ear cress).